The sequence spans 490 residues: N-succinylglutamate 5-semialdehyde dehydrogenase (490 aa).

Gly220–Gly225 is an NAD(+) binding site. Catalysis depends on residues Glu243 and Cys277.

This sequence belongs to the aldehyde dehydrogenase family. AstD subfamily.

It carries out the reaction N-succinyl-L-glutamate 5-semialdehyde + NAD(+) + H2O = N-succinyl-L-glutamate + NADH + 2 H(+). It functions in the pathway amino-acid degradation; L-arginine degradation via AST pathway; L-glutamate and succinate from L-arginine: step 4/5. Catalyzes the NAD-dependent reduction of succinylglutamate semialdehyde into succinylglutamate. The chain is N-succinylglutamate 5-semialdehyde dehydrogenase from Shigella dysenteriae serotype 1 (strain Sd197).